The sequence spans 178 residues: MAELITVARPYAEAVYSLATEQGKLDQWSDALSWLAAMVNNPDLAQVVTNPKHTAQEVEALMLDVLGSRGNDDVKRFIAALIENARLTLLPEIAAQFELLKAQSENIVDALVESAFALSDEQKAELTNTLSKKYGKAVRLDVRENADLIGGVRVSVGDDVIDASVRGKLQAMAASLKN.

It belongs to the ATPase delta chain family. In terms of assembly, F-type ATPases have 2 components, F(1) - the catalytic core - and F(0) - the membrane proton channel. F(1) has five subunits: alpha(3), beta(3), gamma(1), delta(1), epsilon(1). F(0) has three main subunits: a(1), b(2) and c(10-14). The alpha and beta chains form an alternating ring which encloses part of the gamma chain. F(1) is attached to F(0) by a central stalk formed by the gamma and epsilon chains, while a peripheral stalk is formed by the delta and b chains.

The protein resides in the cell inner membrane. Its function is as follows. F(1)F(0) ATP synthase produces ATP from ADP in the presence of a proton or sodium gradient. F-type ATPases consist of two structural domains, F(1) containing the extramembraneous catalytic core and F(0) containing the membrane proton channel, linked together by a central stalk and a peripheral stalk. During catalysis, ATP synthesis in the catalytic domain of F(1) is coupled via a rotary mechanism of the central stalk subunits to proton translocation. Functionally, this protein is part of the stalk that links CF(0) to CF(1). It either transmits conformational changes from CF(0) to CF(1) or is implicated in proton conduction. This chain is ATP synthase subunit delta, found in Chromobacterium violaceum (strain ATCC 12472 / DSM 30191 / JCM 1249 / CCUG 213 / NBRC 12614 / NCIMB 9131 / NCTC 9757 / MK).